The sequence spans 259 residues: Global transcriptional regulator CodY (259 aa).

The interval 1–155 (MNLLEKTRKI…GATVVGMEIL (155 aa)) is GAF domain. Residues 203-222 (ASKIADRVGITRSVIVNALR) constitute a DNA-binding region (H-T-H motif). Residue S215 is modified to Phosphoserine.

It belongs to the CodY family.

Its subcellular location is the cytoplasm. In terms of biological role, DNA-binding global transcriptional regulator which is involved in the adaptive response to starvation and acts by directly or indirectly controlling the expression of numerous genes in response to nutrient availability. During rapid exponential growth, CodY is highly active and represses genes whose products allow adaptation to nutrient depletion. The sequence is that of Global transcriptional regulator CodY from Geobacillus thermodenitrificans (strain NG80-2).